The chain runs to 247 residues: ATP synthase subunit a, chloroplastic (247 aa).

Transmembrane regions (helical) follow at residues 38 to 58 (QVLITSWVVIAILLGSATLAV), 95 to 115 (VPFIGTMFLFIFVSNWSGALL), 134 to 154 (INTTVALALLTSVAYFYAGLT), 199 to 219 (LVVVVLVSLVPSIVPIPVMFL), and 220 to 240 (GLFTSGIQALIFATLAAAYIG).

The protein belongs to the ATPase A chain family. As to quaternary structure, F-type ATPases have 2 components, CF(1) - the catalytic core - and CF(0) - the membrane proton channel. CF(1) has five subunits: alpha(3), beta(3), gamma(1), delta(1), epsilon(1). CF(0) has four main subunits: a, b, b' and c.

Its subcellular location is the plastid. It is found in the chloroplast thylakoid membrane. Functionally, key component of the proton channel; it plays a direct role in the translocation of protons across the membrane. The polypeptide is ATP synthase subunit a, chloroplastic (Vitis vinifera (Grape)).